The chain runs to 215 residues: Adenylate kinase (215 aa).

Residue 10–15 participates in ATP binding; that stretch reads GAGKGT. Residues 30–59 form an NMP region; it reads STGDIFRKNISENTPLGMEARSYMDKGLLV. AMP-binding positions include Thr-31, Arg-36, 57-59, 85-88, and Gln-92; these read LLV and GFPR. Positions 126-163 are LID; sequence GRRVCTSCGGSFHIKFNPPTIDGKCNLCGSDIVQRKDD. Arg-127 contacts ATP. 2 residues coordinate Zn(2+): Cys-130 and Cys-133. Residue 136-137 participates in ATP binding; the sequence is SF. Residues Cys-150 and Cys-153 each coordinate Zn(2+). Positions 160 and 171 each coordinate AMP. An ATP-binding site is contributed by Lys-199.

Belongs to the adenylate kinase family. Monomer.

It localises to the cytoplasm. The catalysed reaction is AMP + ATP = 2 ADP. It functions in the pathway purine metabolism; AMP biosynthesis via salvage pathway; AMP from ADP: step 1/1. Functionally, catalyzes the reversible transfer of the terminal phosphate group between ATP and AMP. Plays an important role in cellular energy homeostasis and in adenine nucleotide metabolism. The protein is Adenylate kinase of Clostridium botulinum (strain Alaska E43 / Type E3).